Reading from the N-terminus, the 56-residue chain is Ovomucoid (56 aa).

The 51-residue stretch at 6-56 (VDCSEYPKPDCTLEYRPLCGSDNKTYASKCNFCNAVVESNGTLTLSHFGKC) folds into the Kazal-like domain. 3 disulfide bridges follow: Cys8-Cys38, Cys16-Cys35, and Cys24-Cys56. Residue Asn45 is glycosylated (N-linked (GlcNAc...) asparagine).

It localises to the secreted. This Callipepla squamata pallida (Blue scaled quail) protein is Ovomucoid.